A 407-amino-acid polypeptide reads, in one-letter code: 5-aminolevulinate synthase 2 (407 aa).

Residues arginine 21 and serine 137 each coordinate substrate. The pyridoxal 5'-phosphate site is built by serine 189, histidine 217, and threonine 245. The active site involves lysine 248. The residue at position 248 (lysine 248) is an N6-(pyridoxal phosphate)lysine. 2 residues coordinate pyridoxal 5'-phosphate: threonine 277 and threonine 278. Position 363 (threonine 363) interacts with substrate.

This sequence belongs to the class-II pyridoxal-phosphate-dependent aminotransferase family. As to quaternary structure, homodimer. Requires pyridoxal 5'-phosphate as cofactor.

It carries out the reaction succinyl-CoA + glycine + H(+) = 5-aminolevulinate + CO2 + CoA. It participates in porphyrin-containing compound metabolism; protoporphyrin-IX biosynthesis; 5-aminolevulinate from glycine: step 1/1. The chain is 5-aminolevulinate synthase 2 (hemT) from Cereibacter sphaeroides (strain ATCC 17023 / DSM 158 / JCM 6121 / CCUG 31486 / LMG 2827 / NBRC 12203 / NCIMB 8253 / ATH 2.4.1.) (Rhodobacter sphaeroides).